The sequence spans 963 residues: Pyruvate, phosphate dikinase 1, chloroplastic (963 aa).

A chloroplast-targeting transit peptide spans 1–76 (MLYIRKKMTS…GLHRETKARA (76 aa)). Residue Thr543 is modified to Phosphothreonine; by PDRP1. His545 (tele-phosphohistidine intermediate) is an active-site residue. Substrate is bound by residues Arg651, Arg707, Glu836, Gly857, Thr858, Asn859, and Asp860. Glu836 serves as a coordination point for Mg(2+). Asp860 serves as a coordination point for Mg(2+). Residue Cys922 is the Proton donor of the active site.

It belongs to the PEP-utilizing enzyme family. In terms of assembly, homotetramer. Interacts with RP1 and RP2. Requires Mg(2+) as cofactor. In terms of processing, phosphorylation of Thr-543 in the dark inactivates the enzyme. Dephosphorylation upon light stimulation reactivates the enzyme. As to expression, isoform 1 is expressed in leaves, flowers and siliques. Isoform 2 is found in cotyledons, rosette and cauline leaves, petioles, flowers and siliques.

The protein localises to the plastid. The protein resides in the chloroplast. Its subcellular location is the cytoplasm. The enzyme catalyses pyruvate + phosphate + ATP = phosphoenolpyruvate + AMP + diphosphate + H(+). With respect to regulation, activated by light-induced dephosphorylation. Inhibited by dark-induced phosphorylation. Both reactions are catalyzed by PDRP1. Its function is as follows. Formation of phosphoenolpyruvate. May be involved in regulating the flux of carbon into starch and fatty acids of seeds and in the remobilization of nitrogen reserves in senescing leaves. In Arabidopsis thaliana (Mouse-ear cress), this protein is Pyruvate, phosphate dikinase 1, chloroplastic (PPDK).